A 185-amino-acid polypeptide reads, in one-letter code: Peptidyl-tRNA hydrolase (185 aa).

Y14 provides a ligand contact to tRNA. The Proton acceptor role is filled by H19. TRNA is bound by residues Y65, N67, and N113.

It belongs to the PTH family. In terms of assembly, monomer.

Its subcellular location is the cytoplasm. It carries out the reaction an N-acyl-L-alpha-aminoacyl-tRNA + H2O = an N-acyl-L-amino acid + a tRNA + H(+). Its function is as follows. Hydrolyzes ribosome-free peptidyl-tRNAs (with 1 or more amino acids incorporated), which drop off the ribosome during protein synthesis, or as a result of ribosome stalling. Catalyzes the release of premature peptidyl moieties from peptidyl-tRNA molecules trapped in stalled 50S ribosomal subunits, and thus maintains levels of free tRNAs and 50S ribosomes. This is Peptidyl-tRNA hydrolase from Rickettsia conorii (strain ATCC VR-613 / Malish 7).